Here is a 363-residue protein sequence, read N- to C-terminus: MKVAISGGGTGGHVYPALAFIRELKKLHPEAEFLYIGTEKGLEADIVKREGIPFESIEITGFKRSLSLENVKTIMRFLSGAKKSKQILRDFKPDVVIGTGGYVCGPVVYAAAKLKIPTLIHEQNSVAGLTNKFLSRYTDKVAICFEEVSDSFASEKIVFTGNPRASEVVGVESEGALEAYGLESGKPTVLVFGGSRGARGVNEAVEAILPEWNKRDFQLLYVTGDVHYEKIKDTLADLNLGSHISVQPFIYDMPKILNAVTLVVSRAGATTLAELTALGVPSILIPSPYVTANHQENNARALEKNNAAIVITEAELKNTDLMATVDSILTDEEKLNAMKASAKQMGRPEAAAKLVEAVLGIMK.

UDP-N-acetyl-alpha-D-glucosamine-binding positions include 10–12, asparagine 124, serine 195, isoleucine 250, and glutamine 295; that span reads TGG.

It belongs to the glycosyltransferase 28 family. MurG subfamily.

It is found in the cell membrane. The enzyme catalyses di-trans,octa-cis-undecaprenyl diphospho-N-acetyl-alpha-D-muramoyl-L-alanyl-D-glutamyl-meso-2,6-diaminopimeloyl-D-alanyl-D-alanine + UDP-N-acetyl-alpha-D-glucosamine = di-trans,octa-cis-undecaprenyl diphospho-[N-acetyl-alpha-D-glucosaminyl-(1-&gt;4)]-N-acetyl-alpha-D-muramoyl-L-alanyl-D-glutamyl-meso-2,6-diaminopimeloyl-D-alanyl-D-alanine + UDP + H(+). Its pathway is cell wall biogenesis; peptidoglycan biosynthesis. Its function is as follows. Cell wall formation. Catalyzes the transfer of a GlcNAc subunit on undecaprenyl-pyrophosphoryl-MurNAc-pentapeptide (lipid intermediate I) to form undecaprenyl-pyrophosphoryl-MurNAc-(pentapeptide)GlcNAc (lipid intermediate II). In Listeria welshimeri serovar 6b (strain ATCC 35897 / DSM 20650 / CCUG 15529 / CIP 8149 / NCTC 11857 / SLCC 5334 / V8), this protein is UDP-N-acetylglucosamine--N-acetylmuramyl-(pentapeptide) pyrophosphoryl-undecaprenol N-acetylglucosamine transferase.